The sequence spans 179 residues: MTQKVGVLAIQGGYQKHADMFKSLGVEVKLVKFNNDFDSIDRLVIPGGESTTLLNLLNKHQIFDKLYNFCSSKPVFGTCAGSIILSKGEGYLNLLDLEVQRNAYGRQVDSFVADISFNDKNITGVFIRAPKFIVVGNQVDILSKYQNSPVLLRQANILVSSFHPELTQDPTIHEYFLAM.

Residue 48 to 50 (GES) coordinates L-glutamine. The active-site Nucleophile is the Cys-79. Residues Arg-101 and 127-128 (IR) contribute to the L-glutamine site. Active-site charge relay system residues include His-163 and Glu-165.

This sequence belongs to the glutaminase PdxT/SNO family. In the presence of PdxS, forms a dodecamer of heterodimers. Only shows activity in the heterodimer.

The enzyme catalyses aldehydo-D-ribose 5-phosphate + D-glyceraldehyde 3-phosphate + L-glutamine = pyridoxal 5'-phosphate + L-glutamate + phosphate + 3 H2O + H(+). It catalyses the reaction L-glutamine + H2O = L-glutamate + NH4(+). The protein operates within cofactor biosynthesis; pyridoxal 5'-phosphate biosynthesis. Functionally, catalyzes the hydrolysis of glutamine to glutamate and ammonia as part of the biosynthesis of pyridoxal 5'-phosphate. The resulting ammonia molecule is channeled to the active site of PdxS. This Francisella tularensis subsp. tularensis (strain FSC 198) protein is Pyridoxal 5'-phosphate synthase subunit PdxT.